We begin with the raw amino-acid sequence, 542 residues long: MFKLVSYIILSWVLVCLAQPDVSVVASVVSCICGYSLLWAGLFALVEQLSWKKVWCIAFIWTWTVEGAHFSWMLEDLYVGTSIYFVWGILLSYLATLFASFSCLVVWCCRKQYRGALVWLPGVWVAIEAIRYYGLLSGVSFDFIGWPLTATAYGRQFGSFFGWAGQSFLVIAANICCFAVCLLKHSFSKGLWLTLCAFPYLLGGAHYEYLKKHFSDSEVLRVAIVQPGYSPHMHAGRTASAIWRGLVSLCQTIQTPVDVIVFPEVSVPFGLHRQAYTLHENQPVLESLLPNKSWGEFFTNLDWIQAIAERYQCTVIMGMERWENKGGILHLYNAAECVSREGEITSYDKRILVPGGEYIPGGKIGFSLCQTFFPEFALPFQRLPGEFSGVVNITERIKAGISICYEETFGYAIRPYKRQQADILVNLTNDGWYPRSRLPLVHFYHGMLRNQELGIPCIRACRTGVSAAVDSLGRIVGILPWESRTCPVSTGVLQVSVPLYSYHTVYARLGDAPLLLIAVCSVIGAIAYFYRKKKETPPQTFF.

The next 6 membrane-spanning stretches (helical) occupy residues Val-24 to Ala-44, Val-54 to Leu-74, Phe-85 to Val-105, Ala-116 to Leu-136, Phe-160 to Val-180, and Gly-190 to Leu-210. The CN hydrolase domain occupies Leu-220–Leu-499. The Proton acceptor role is filled by Glu-264. Residue Lys-349 is part of the active site. The active-site Nucleophile is the Cys-404. A helical transmembrane segment spans residues Leu-509–Phe-529.

It belongs to the CN hydrolase family. Apolipoprotein N-acyltransferase subfamily.

It localises to the cell inner membrane. It carries out the reaction N-terminal S-1,2-diacyl-sn-glyceryl-L-cysteinyl-[lipoprotein] + a glycerophospholipid = N-acyl-S-1,2-diacyl-sn-glyceryl-L-cysteinyl-[lipoprotein] + a 2-acyl-sn-glycero-3-phospholipid + H(+). It participates in protein modification; lipoprotein biosynthesis (N-acyl transfer). Functionally, catalyzes the phospholipid dependent N-acylation of the N-terminal cysteine of apolipoprotein, the last step in lipoprotein maturation. The polypeptide is Apolipoprotein N-acyltransferase (Chlamydia trachomatis serovar D (strain ATCC VR-885 / DSM 19411 / UW-3/Cx)).